A 277-amino-acid chain; its full sequence is Protein PTST, chloroplastic (277 aa).

The transit peptide at 1–44 (MGCVPRIEFGCSSQSLTLSWNLRAWNLCRLNTISHFQKLPYPLV) directs the protein to the chloroplast. Positions 95–152 (DTERSKLVKKLSEANQQNRFLKRQLKTQEHEITNIKTELALMELEVQALVKLAEEIAN) form a coiled coil.

As to quaternary structure, interacts with GBSS1.

The protein localises to the plastid. Its subcellular location is the chloroplast stroma. In terms of biological role, involved in targeting GBSS1 to the starch granule. Was originally thought to be a carbohydrate-binding scaffold protein, but it has been shown that it is mainly found as a soluble protein and that interaction with GBSS1 is a pre-requisite for subsequent starch granule binding. Dissociation from starch as a function of pH, Mg(2+) concentration or redox state is not observed. Interacts primarily with amylopectin and is required for amylose synthesis. This chain is Protein PTST, chloroplastic, found in Arabidopsis thaliana (Mouse-ear cress).